Here is a 537-residue protein sequence, read N- to C-terminus: Aminopeptidase Y (537 aa).

The N-terminal stretch at 1-21 (MHFSLKQLAVAAFYATNLGSA) is a signal peptide. The propeptide occupies 22–56 (YVIPQFFQEAFQQEEPIENYLPQLNDDDSSAVAAN). Residues Asn-85, Asn-96, Asn-115, Asn-150, and Asn-162 are each glycosylated (N-linked (GlcNAc...) asparagine). Residues His-314 and Asp-326 each coordinate Zn(2+). The active-site Proton acceptor is the Glu-358. A Zn(2+)-binding site is contributed by Glu-359. The N-linked (GlcNAc...) asparagine glycan is linked to Asn-371. Asp-387 lines the Zn(2+) pocket. Asn-427 carries N-linked (GlcNAc...) asparagine glycosylation. His-472 is a binding site for Zn(2+). An N-linked (GlcNAc...) asparagine glycan is attached at Asn-480.

Belongs to the peptidase M28 family. M28A subfamily. Monomer. Zn(2+) serves as cofactor.

Its subcellular location is the vacuole. The catalysed reaction is Preferentially, release of N-terminal lysine.. The sequence is that of Aminopeptidase Y (APE3) from Saccharomyces cerevisiae (strain ATCC 204508 / S288c) (Baker's yeast).